The chain runs to 393 residues: tRNA(Met) cytidine acetate ligase (393 aa).

The ATP site is built by glycine 81, asparagine 142, and arginine 167.

This sequence belongs to the TmcAL family.

It is found in the cytoplasm. The enzyme catalyses cytidine(34) in elongator tRNA(Met) + acetate + ATP = N(4)-acetylcytidine(34) in elongator tRNA(Met) + AMP + diphosphate. Catalyzes the formation of N(4)-acetylcytidine (ac(4)C) at the wobble position of elongator tRNA(Met), using acetate and ATP as substrates. First activates an acetate ion to form acetyladenylate (Ac-AMP) and then transfers the acetyl group to tRNA to form ac(4)C34. The sequence is that of tRNA(Met) cytidine acetate ligase from Bacillus cereus (strain ATCC 14579 / DSM 31 / CCUG 7414 / JCM 2152 / NBRC 15305 / NCIMB 9373 / NCTC 2599 / NRRL B-3711).